The sequence spans 699 residues: Kinesin-like protein KIF3A (699 aa).

The Kinesin motor domain occupies 14–345; it reads NVKVVVRCRP…LRYANRAKNI (332 aa). An ATP-binding site is contributed by 100–107; it reads GQTGTGKT. Positions 355-590 form a coiled coil; the sequence is PKDALLRQFQ…LSRELRLQML (236 aa). 2 disordered regions span residues 372-421 and 663-699; these read KKLE…KMIE and SLMKLERPRTSKGKARPKTGRRKRSAKPETVIDSLLQ. Over residues 376-400 the composition is skewed to acidic residues; sequence EGEEISGSDISGSEEDDDEEGEVGE. Over residues 672 to 687 the composition is skewed to basic residues; the sequence is TSKGKARPKTGRRKRS. Position 687 is a phosphoserine (Ser687). The globular stretch occupies residues 697–699; sequence LLQ.

It belongs to the TRAFAC class myosin-kinesin ATPase superfamily. Kinesin family. Kinesin II subfamily. As to quaternary structure, heterodimer of KIF3A and KIF3B. Interacts with CIMAP3. Interacts with CLN3. Interacts with DCTN1. Interacts with FLCN. Interacts with AP3B1.

It localises to the cytoplasm. It is found in the cytoskeleton. The protein localises to the cell projection. The protein resides in the cilium. Its subcellular location is the microtubule organizing center. It localises to the centrosome. It is found in the centriole. Its function is as follows. Microtubule-based anterograde translocator for membranous organelles. Plus end-directed microtubule sliding activity in vitro. Plays a role in primary cilia formation. Plays a role in centriole cohesion and subdistal appendage organization and function. Regulates the formation of the subdistal appendage via recruitment of DCTN1 to the centriole. Also required for ciliary basal feet formation and microtubule anchoring to mother centriole. In Homo sapiens (Human), this protein is Kinesin-like protein KIF3A (KIF3A).